We begin with the raw amino-acid sequence, 115 residues long: Large ribosomal subunit protein bL20c (115 aa).

This sequence belongs to the bacterial ribosomal protein bL20 family.

The protein resides in the plastid. The protein localises to the chloroplast. Binds directly to 23S ribosomal RNA and is necessary for the in vitro assembly process of the 50S ribosomal subunit. It is not involved in the protein synthesizing functions of that subunit. The polypeptide is Large ribosomal subunit protein bL20c (rpl20) (Mesostigma viride (Green alga)).